The primary structure comprises 224 residues: UPF0173 metal-dependent hydrolase TTHA1283 (224 aa).

Belongs to the UPF0173 family.

The chain is UPF0173 metal-dependent hydrolase TTHA1283 from Thermus thermophilus (strain ATCC 27634 / DSM 579 / HB8).